Here is a 405-residue protein sequence, read N- to C-terminus: Deoxyguanosinetriphosphate triphosphohydrolase-like protein (405 aa).

The HD domain occupies 75–219 (RLTHTIEVAQ…AAIADDIAYN (145 aa)).

The protein belongs to the dGTPase family. Type 2 subfamily.

The sequence is that of Deoxyguanosinetriphosphate triphosphohydrolase-like protein from Rhizobium meliloti (strain 1021) (Ensifer meliloti).